Reading from the N-terminus, the 516-residue chain is Bifunctional purine biosynthesis protein PurH (516 aa).

Residues 1-146 (MAPFALLSVS…KNHADVAVLT (146 aa)) form the MGS-like domain.

It belongs to the PurH family.

It catalyses the reaction (6R)-10-formyltetrahydrofolate + 5-amino-1-(5-phospho-beta-D-ribosyl)imidazole-4-carboxamide = 5-formamido-1-(5-phospho-D-ribosyl)imidazole-4-carboxamide + (6S)-5,6,7,8-tetrahydrofolate. It carries out the reaction IMP + H2O = 5-formamido-1-(5-phospho-D-ribosyl)imidazole-4-carboxamide. The protein operates within purine metabolism; IMP biosynthesis via de novo pathway; 5-formamido-1-(5-phospho-D-ribosyl)imidazole-4-carboxamide from 5-amino-1-(5-phospho-D-ribosyl)imidazole-4-carboxamide (10-formyl THF route): step 1/1. It functions in the pathway purine metabolism; IMP biosynthesis via de novo pathway; IMP from 5-formamido-1-(5-phospho-D-ribosyl)imidazole-4-carboxamide: step 1/1. The protein is Bifunctional purine biosynthesis protein PurH of Parasynechococcus marenigrum (strain WH8102).